The sequence spans 650 residues: Rab proteins geranylgeranyltransferase component A 1 (650 aa).

2 disordered regions span residues 156 to 208 (IPAE…ETPK) and 603 to 650 (PAPP…EPSE). Residues 177–190 (ATGKKENSDAKSST) are compositionally biased toward basic and acidic residues. Residues 616 to 634 (DSSQQEVPESSVTPETNSE) are compositionally biased toward polar residues.

The protein belongs to the Rab GDI family. In terms of assembly, monomer. Heterotrimer composed of RABGGTA, RABGGTB and CHM; within this trimer, RABGGTA and RABGGTB form the catalytic component B, while CHM (component A) mediates Rab protein binding. Can associate with the Rab GGTase dimer (RGGT or component B) prior to Rab protein binding; the association is stabilized by geranylgeranyl pyrophosphate (GGpp). The CHM:RGGT:Rab complex is destabilized by GGpp. Interacts with RAB1A, RAB1B, RAB7A and RAB27A and mediates their prenylation. Interacts with RAB5A. Interacts with the non-phosphorylated forms of RAB3A, RAB3B, RAB3C, RAB3D, RAB5B, RAB5C RAB8A, RAB8B, RAB10, RAB12, RAB35, and RAB43. In terms of tissue distribution, most abundant in the heart, brain, and spleen. Lower levels seen in the lung, liver, muscle and kidney. Extremely low levels seen in the testis.

Its subcellular location is the cytoplasm. The protein resides in the cytosol. In terms of biological role, substrate-binding subunit of the Rab geranylgeranyltransferase (GGTase) complex. Binds unprenylated Rab proteins and presents the substrate peptide to the catalytic component B composed of RABGGTA and RABGGTB, and remains bound to it after the geranylgeranyl transfer reaction. The component A is thought to be regenerated by transferring its prenylated Rab back to the donor membrane. Besides, a pre-formed complex consisting of CHM and the Rab GGTase dimer (RGGT or component B) can bind to and prenylate Rab proteins; this alternative pathway is proposed to be the predominant pathway for Rab protein geranylgeranylation. The polypeptide is Rab proteins geranylgeranyltransferase component A 1 (Chm) (Rattus norvegicus (Rat)).